Consider the following 528-residue polypeptide: DEAD-box ATP-dependent RNA helicase CshA (528 aa).

The Q motif motif lies at 2–30 (TTFRELGLSDSLLQSVESMGFEEATPIQA). Positions 33–203 (IPHALQGKDI…ERFMTEPQHI (171 aa)) constitute a Helicase ATP-binding domain. Residue 46–53 (AQTGTGKT) participates in ATP binding. The DEAD box motif lies at 151–154 (DEAD). A Helicase C-terminal domain is found at 214 to 374 (NIQQFYLEVQ…RMDAPTLDEA (161 aa)). Residues 428-528 (TTPIALTSEP…RKHHSRKPQA (101 aa)) form a disordered region. A compositionally biased stretch (basic and acidic residues) spans 458-506 (DGNRNRSRDGRGGDGRNRDRNRDGRNRDGNRDRNREGSRDGNRGRRGEG). Basic residues predominate over residues 518-528 (ERKHHSRKPQA).

It belongs to the DEAD box helicase family. CshA subfamily. In terms of assembly, oligomerizes, may be a member of the RNA degradosome.

Its subcellular location is the cytoplasm. It catalyses the reaction ATP + H2O = ADP + phosphate + H(+). Functionally, DEAD-box RNA helicase possibly involved in RNA degradation. Unwinds dsRNA in both 5'- and 3'-directions, has RNA-dependent ATPase activity. This is DEAD-box ATP-dependent RNA helicase CshA from Bacillus thuringiensis (strain Al Hakam).